A 363-amino-acid polypeptide reads, in one-letter code: Protein MAK32 (363 aa).

To S.pombe SpAC4G8.14c.

Its function is as follows. Necessary for the structural stability of L-A double-stranded RNA-containing particles. Necessary for growth at 37 degrees Celsius as well as for maintenance of the killer plasmid. In Saccharomyces cerevisiae (strain ATCC 204508 / S288c) (Baker's yeast), this protein is Protein MAK32 (MAK32).